The sequence spans 318 residues: Probable cell division protein WhiA (318 aa).

The segment at residues 276–310 (TLQELGEMVESGSISKSGINHRLRKIDQIADKIRN) is a DNA-binding region (H-T-H motif).

This sequence belongs to the WhiA family.

Involved in cell division and chromosome segregation. This is Probable cell division protein WhiA from Exiguobacterium sibiricum (strain DSM 17290 / CCUG 55495 / CIP 109462 / JCM 13490 / 255-15).